Consider the following 394-residue polypeptide: Serine palmitoyltransferase (394 aa).

Residues 111 to 112 (GF), Ser183, His211, and Thr239 contribute to the pyridoxal 5'-phosphate site. An N6-(pyridoxal phosphate)lysine modification is found at Lys242.

The protein belongs to the class-II pyridoxal-phosphate-dependent aminotransferase family. Pyridoxal 5'-phosphate serves as cofactor.

It catalyses the reaction L-serine + hexadecanoyl-CoA + H(+) = 3-oxosphinganine + CO2 + CoA. It participates in lipid metabolism; sphingolipid metabolism. Involved in de novo bacterial ceramide synthesis. Catalyzes the condensation of L-serine with palmitoyl-CoA (hexadecanoyl-CoA) to produce 3-oxosphinganine. Also capable of using alanine as substrate leading to the formation of 1-deoxysphinganine (1-deoxySa). Contributes to the levels of endogenous sphingolipids in its host. The sequence is that of Serine palmitoyltransferase from Bacteroides thetaiotaomicron (strain ATCC 29148 / DSM 2079 / JCM 5827 / CCUG 10774 / NCTC 10582 / VPI-5482 / E50).